We begin with the raw amino-acid sequence, 255 residues long: Acetylglutamate kinase (255 aa).

Substrate is bound by residues 40–41 (GG), arginine 62, and asparagine 153.

Belongs to the acetylglutamate kinase family. ArgB subfamily.

The protein resides in the cytoplasm. The catalysed reaction is N-acetyl-L-glutamate + ATP = N-acetyl-L-glutamyl 5-phosphate + ADP. The protein operates within amino-acid biosynthesis; L-arginine biosynthesis; N(2)-acetyl-L-ornithine from L-glutamate: step 2/4. Catalyzes the ATP-dependent phosphorylation of N-acetyl-L-glutamate. The chain is Acetylglutamate kinase from Bacillus mycoides (strain KBAB4) (Bacillus weihenstephanensis).